The primary structure comprises 150 residues: Histone H3-like centromeric protein A (150 aa).

The disordered stretch occupies residues 1–55; sequence MRPGSTPPSRRKSRPPRRVSPPLPTTSRTSPRRPHAQQQRRASRASPKKRFRPGT. Basic residues predominate over residues 41 to 53; it reads RASRASPKKRFRP. Residues 53-150 form an H3-like region; it reads PGTRALMEIR…RIRGVNEGLG (98 aa).

This sequence belongs to the histone H3 family. As to quaternary structure, component of centromeric nucleosomes, where DNA is wrapped around a histone octamer core. The octamer contains two molecules each of H2A, H2B, CENPA and H4 assembled in one CENPA-H4 heterotetramer and two H2A-H2B heterodimers. CENPA modulates the DNA-binding characteristics of nucleosomes so that protruding DNA ends have higher flexibility than in nucleosomes containing conventional histone H3.

The protein localises to the nucleus. It is found in the chromosome. Its subcellular location is the centromere. Functionally, histone H3-like nucleosomal protein that is specifically found in centromeric nucleosomes. Replaces conventional H3 in the nucleosome core of centromeric chromatin that serves as an assembly site for the inner kinetochore. The presence of CENPA subtly modifies the nucleosome structure and the way DNA is wrapped around the nucleosome and gives rise to protruding DNA ends that are less well-ordered and rigid compared to nucleosomes containing histone H3. May serve as an epigenetic mark that propagates centromere identity through replication and cell division. Required for recruitment and assembly of kinetochore proteins, and as a consequence required for progress through mitosis, chromosome segregation and cytokinesis. The chain is Histone H3-like centromeric protein A (cenpa) from Xenopus laevis (African clawed frog).